The primary structure comprises 239 residues: Transcriptional regulatory protein BtsR (239 aa).

Residues 3 to 116 (KVLIVDDEPL…RLEKTLHRLR (114 aa)) form the Response regulatory domain. A 4-aspartylphosphate modification is found at aspartate 54. An HTH LytTR-type domain is found at 137-239 (IPCTGHSRIY…LKSLKEAIGL (103 aa)).

In terms of processing, phosphorylated by BtsS.

Its function is as follows. Member of the two-component regulatory system BtsS/BtsR. BtsR regulates expression of btsT by binding to its promoter region. The protein is Transcriptional regulatory protein BtsR of Salmonella typhi.